The following is a 68-amino-acid chain: Large ribosomal subunit protein bL35 (68 aa).

A compositionally biased stretch (basic residues) spans 1–25 (MGTKIKTHKGTKKRFRLSAKGKAMH). Residues 1–43 (MGTKIKTHKGTKKRFRLSAKGKAMHRQSGTSHLAKGLSKKRRR) form a disordered region.

Belongs to the bacterial ribosomal protein bL35 family.

In Rhodopirellula baltica (strain DSM 10527 / NCIMB 13988 / SH1), this protein is Large ribosomal subunit protein bL35.